Reading from the N-terminus, the 190-residue chain is MTITISAVILAGGLGRRMGGVDKGLQFWRGKPLIETVYQRLHRQIERISINANRNREIYARFGVPVFSDRLAGFQGPLSGILTALERATTDYVLFVPCDCPNFPLNLLEKLKSAVEFSQISLAYAHDGERDHPTFCLVSTQLKNALADYLAGGERRMLYFMQMHGAVAVDFSTEKQGFININNLADLNSP.

Residues 10–12 (LAG), lysine 23, asparagine 51, aspartate 69, and aspartate 99 contribute to the GTP site. Aspartate 99 is a Mg(2+) binding site.

This sequence belongs to the MobA family. Monomer. Requires Mg(2+) as cofactor.

The protein resides in the cytoplasm. It carries out the reaction Mo-molybdopterin + GTP + H(+) = Mo-molybdopterin guanine dinucleotide + diphosphate. Transfers a GMP moiety from GTP to Mo-molybdopterin (Mo-MPT) cofactor (Moco or molybdenum cofactor) to form Mo-molybdopterin guanine dinucleotide (Mo-MGD) cofactor. The sequence is that of Molybdenum cofactor guanylyltransferase from Mannheimia succiniciproducens (strain KCTC 0769BP / MBEL55E).